The following is a 114-amino-acid chain: UPF0060 membrane protein GDI3492/Gdia_2889 (114 aa).

4 consecutive transmembrane segments (helical) span residues 8 to 28 (FAVY…WWCW), 35 to 55 (AWVL…LTLV), 64 to 84 (FAAY…LVEG), and 92 to 112 (AAGV…GRGA).

It belongs to the UPF0060 family.

The protein resides in the cell inner membrane. The protein is UPF0060 membrane protein GDI3492/Gdia_2889 of Gluconacetobacter diazotrophicus (strain ATCC 49037 / DSM 5601 / CCUG 37298 / CIP 103539 / LMG 7603 / PAl5).